A 105-amino-acid polypeptide reads, in one-letter code: Anti-sigma factor RsrA (105 aa).

Residues Cys-11, His-37, Cys-41, and Cys-44 each coordinate Zn(2+). A disulfide bond links Cys-11 and Cys-44. A contributes to redox-sensitivity region spans residues 33 to 47 (KFEHHFEECSPCLEK). Positions 86–105 (QSVPEHDVAAAPSSSAPQES) are disordered. Positions 94–105 (AAAPSSSAPQES) are enriched in low complexity.

The protein belongs to the zinc-associated anti-sigma factor (ZAS) superfamily. Interacts with cognate sigma factor SigR under reducing but not oxiding conditions. Treatment with the thiol-oxidzing agent diamide inhibits the interaction, while incubation with thioredoxin (trxA) stimulates the interaction. The cofactor is Zn(2+). Under oxidizing conditions up to 3 disulfide bonds are formed. A single disulfide bond inhibits binding to SigR. Cys-11 forms a disulfide bond with either Cys-44 (the major bind) or Cys-41 (a minor bond).

Functionally, a redox-regulated anti-sigma factor for extracytoplasmic function (ECF) sigma factor SigR, and a key sensor of disulfide stress. Holds SigR, its cognate ECF sigma factor, in an inactive form, inhibiting its sigma activity under reducing but not oxidizing conditions; oxidation and reduction of the anti-sigma factor is reversible. Mycothiol (MSH) is competent for reduction of RsrA, allowing it to bind to SigR. In conjunction with its cognate sigma factor SigR may sense the intracellular level of reduced MSH. Probably releases SigR during oxidative stress. This Streptomyces coelicolor (strain ATCC BAA-471 / A3(2) / M145) protein is Anti-sigma factor RsrA (rsrA).